The chain runs to 138 residues: Small ribosomal subunit protein uS11c (138 aa).

A disordered region spans residues Met-1–Val-22.

It belongs to the universal ribosomal protein uS11 family. Part of the 30S ribosomal subunit.

Its subcellular location is the plastid. This chain is Small ribosomal subunit protein uS11c, found in Cuscuta exaltata (Tall dodder).